We begin with the raw amino-acid sequence, 30 residues long: Dicynthaurin (30 aa).

T30 carries the post-translational modification Threonine amide.

As to quaternary structure, homodimer.

The protein localises to the secreted. Shows antibacterial activity against both Gram-positive and Gram-negative bacteria. Its antimicrobial activity is optimal at NaCl concentrations below 100 mM, suggesting that the antimicrobial actions of this peptide may take place intracellularly rather than extracellularly. Has no activity against the fungus C.albicans. Has modest hemolytic activity. The sequence is that of Dicynthaurin from Halocynthia aurantium (Sea peach).